A 386-amino-acid polypeptide reads, in one-letter code: Succinate--CoA ligase [ADP-forming] subunit beta (386 aa).

The region spanning 9-244 (KDLLASYDVP…PSQENVRDVL (236 aa)) is the ATP-grasp domain. Residues lysine 46, 53–55 (GRG), valine 102, and glutamate 107 contribute to the ATP site. Asparagine 199 and aspartate 213 together coordinate Mg(2+). Residues asparagine 264 and 321-323 (GIM) each bind substrate.

The protein belongs to the succinate/malate CoA ligase beta subunit family. Heterotetramer of two alpha and two beta subunits. The cofactor is Mg(2+).

It catalyses the reaction succinate + ATP + CoA = succinyl-CoA + ADP + phosphate. The catalysed reaction is GTP + succinate + CoA = succinyl-CoA + GDP + phosphate. It functions in the pathway carbohydrate metabolism; tricarboxylic acid cycle; succinate from succinyl-CoA (ligase route): step 1/1. Functionally, succinyl-CoA synthetase functions in the citric acid cycle (TCA), coupling the hydrolysis of succinyl-CoA to the synthesis of either ATP or GTP and thus represents the only step of substrate-level phosphorylation in the TCA. The beta subunit provides nucleotide specificity of the enzyme and binds the substrate succinate, while the binding sites for coenzyme A and phosphate are found in the alpha subunit. This chain is Succinate--CoA ligase [ADP-forming] subunit beta, found in Chlamydia pneumoniae (Chlamydophila pneumoniae).